The following is a 240-amino-acid chain: Uridylate kinase (240 aa).

An ATP-binding site is contributed by 13 to 16; the sequence is KASG. Residues 21–26 form an involved in allosteric activation by GTP region; sequence GSQGFG. Gly55 contributes to the UMP binding site. 2 residues coordinate ATP: Gly56 and Arg60. UMP contacts are provided by residues Asp75 and 136 to 143; that span reads TGNPFFTT. ATP-binding residues include Thr163, Gln164, Tyr169, and Asp172.

This sequence belongs to the UMP kinase family. In terms of assembly, homohexamer.

It localises to the cytoplasm. It carries out the reaction UMP + ATP = UDP + ADP. It participates in pyrimidine metabolism; CTP biosynthesis via de novo pathway; UDP from UMP (UMPK route): step 1/1. With respect to regulation, allosterically activated by GTP. Inhibited by UTP. Its function is as follows. Catalyzes the reversible phosphorylation of UMP to UDP. This Brucella anthropi (strain ATCC 49188 / DSM 6882 / CCUG 24695 / JCM 21032 / LMG 3331 / NBRC 15819 / NCTC 12168 / Alc 37) (Ochrobactrum anthropi) protein is Uridylate kinase.